A 683-amino-acid chain; its full sequence is Probable potassium transport system protein Kup 1 (683 aa).

A run of 12 helical transmembrane segments spans residues 13 to 33 (GLLIAIGIVYGDIGTSPLYVM), 55 to 75 (ISLVLWTVTLLTTLQTVFIAL), 98 to 118 (WLVLPALIGGAAILADGTLTP), 139 to 159 (VPVSTQGTVIAITVVILLLLF), 168 to 188 (IIGKAFGPIMFIWFTFLGVIG), 218 to 238 (AGIFILGSIFLATTGAEALYS), 251 to 271 (SWPYVFVCLSLNYFGQGVWIL), 296 to 316 (LAAIVLATIAAVIASQALITG), 345 to 365 (IYIPSVNKMICAATIAIVLFF), 376 to 396 (GLSITISMLMTTILLYEWLAM), 401 to 421 (TIWNWLFLIFFGFLDVMFMLA), and 426 to 446 (FMHGGYVSLVIAGFIGIIMYV).

It belongs to the HAK/KUP transporter (TC 2.A.72) family.

It is found in the cell membrane. The catalysed reaction is K(+)(in) + H(+)(in) = K(+)(out) + H(+)(out). Its function is as follows. Transport of potassium into the cell. Likely operates as a K(+):H(+) symporter. This is Probable potassium transport system protein Kup 1 from Lactobacillus johnsonii (strain CNCM I-12250 / La1 / NCC 533).